We begin with the raw amino-acid sequence, 251 residues long: Octanoyltransferase (251 aa).

Positions 56–241 constitute a BPL/LPL catalytic domain; sequence ADTGDEIWVV…NLDGASAAAD (186 aa). Substrate-binding positions include 96–103, 168–170, and 181–183; these read RGGQITYH, ALG, and GLS. The active-site Acyl-thioester intermediate is the Cys199.

The protein belongs to the LipB family.

Its subcellular location is the cytoplasm. It catalyses the reaction octanoyl-[ACP] + L-lysyl-[protein] = N(6)-octanoyl-L-lysyl-[protein] + holo-[ACP] + H(+). Its pathway is protein modification; protein lipoylation via endogenous pathway; protein N(6)-(lipoyl)lysine from octanoyl-[acyl-carrier-protein]: step 1/2. Its function is as follows. Catalyzes the transfer of endogenously produced octanoic acid from octanoyl-acyl-carrier-protein onto the lipoyl domains of lipoate-dependent enzymes. Lipoyl-ACP can also act as a substrate although octanoyl-ACP is likely to be the physiological substrate. The polypeptide is Octanoyltransferase (Burkholderia cenocepacia (strain HI2424)).